Reading from the N-terminus, the 555-residue chain is Sulfite reductase [NADPH] hemoprotein beta-component (555 aa).

Residues Cys430, Cys436, Cys475, and Cys479 each coordinate [4Fe-4S] cluster. Cys479 serves as a coordination point for siroheme.

It belongs to the nitrite and sulfite reductase 4Fe-4S domain family. Alpha(8)-beta(8). The alpha component is a flavoprotein, the beta component is a hemoprotein. Siroheme serves as cofactor. [4Fe-4S] cluster is required as a cofactor.

It carries out the reaction hydrogen sulfide + 3 NADP(+) + 3 H2O = sulfite + 3 NADPH + 4 H(+). The protein operates within sulfur metabolism; hydrogen sulfide biosynthesis; hydrogen sulfide from sulfite (NADPH route): step 1/1. Its function is as follows. Component of the sulfite reductase complex that catalyzes the 6-electron reduction of sulfite to sulfide. This is one of several activities required for the biosynthesis of L-cysteine from sulfate. This Leptospira biflexa serovar Patoc (strain Patoc 1 / Ames) protein is Sulfite reductase [NADPH] hemoprotein beta-component.